A 1315-amino-acid chain; its full sequence is Myopalladin (1315 aa).

Disordered regions lie at residues 19 to 60 (SYLA…DLPD), 81 to 145 (INHD…TQSK), 166 to 204 (HSSK…TERR), and 230 to 266 (EAKR…LGQP). Composition is skewed to basic and acidic residues over residues 23 to 35 (ETRH…RSRA) and 84 to 104 (DPLE…DQTK). Phosphoserine is present on residues serine 99 and serine 129. The span at 166 to 180 (HSSKRIRPRACKNHK) shows a compositional bias: basic residues. Residues 184–199 (ESQNKVLQENSPTFSD) are compositionally biased toward polar residues. The stretch at 219–240 (DNELNHAIEQREAKRREAELAA) forms a coiled coil. A Phosphothreonine modification is found at threonine 249. The region spanning 267 to 357 (PRFTQKLRSR…DSTSAEIYIE (91 aa)) is the Ig-like 1 domain. Cysteines 288 and 339 form a disulfide. The segment at 359 to 392 (VSSSDSEGDPNKEEMNRIQKPNEVSSPPTTSAAI) is disordered. The Ig-like 2 domain maps to 432-528 (PVFTKMLQNL…GTVSSIAQLD (97 aa)). Residues cysteine 453 and cysteine 512 are joined by a disulfide bond. Disordered regions lie at residues 535 to 652 (ISDN…VLAK), 674 to 704 (LQNT…SSKQ), and 725 to 747 (SSTS…NTPQ). Polar residues predominate over residues 609 to 623 (SSGSGAANTSQTRPN). Serine 641 carries the post-translational modification Phosphoserine. Low complexity predominate over residues 725-741 (SSTSTATVSPSSSPVFT). Position 754 is a phosphoserine (serine 754). Disordered stretches follow at residues 762-814 (HPST…TPVS) and 840-865 (NAMG…KAPQ). Positions 779 to 790 (PAPPSPAEPAAP) are enriched in pro residues. 2 positions are modified to phosphoserine: serine 809 and serine 814. 2 positions are modified to phosphoserine: serine 903 and serine 924. Ig-like domains lie at 941–1025 (PIFD…GRIS), 1068–1157 (PHFL…LELT), and 1167–1257 (PVIL…ARLD). Cysteines 1089 and 1141 form a disulfide.

This sequence belongs to the myotilin/palladin family. Interacts with TTN/titin, NEB, NEBL, ACTN2 and CARP.

The protein resides in the cytoplasm. The protein localises to the nucleus. It is found in the myofibril. It localises to the sarcomere. Its subcellular location is the z line. Component of the sarcomere that tethers together nebulin (skeletal muscle) and nebulette (cardiac muscle) to alpha-actinin, at the Z lines. The protein is Myopalladin (Mypn) of Mus musculus (Mouse).